A 508-amino-acid chain; its full sequence is GMP synthase [glutamine-hydrolyzing] (508 aa).

The Glutamine amidotransferase type-1 domain maps to 1–189 (MILVLDFGSQ…ALLVCGCEKT (189 aa)). Residue C78 is the Nucleophile of the active site. Catalysis depends on residues H163 and E165. The region spanning 190-383 (WGMQHFAQRE…LGVSQDFLMR (194 aa)) is the GMPS ATP-PPase domain. Residue 217–223 (SGGVDST) coordinates ATP.

In terms of assembly, homodimer.

It catalyses the reaction XMP + L-glutamine + ATP + H2O = GMP + L-glutamate + AMP + diphosphate + 2 H(+). The protein operates within purine metabolism; GMP biosynthesis; GMP from XMP (L-Gln route): step 1/1. In terms of biological role, catalyzes the synthesis of GMP from XMP. The chain is GMP synthase [glutamine-hydrolyzing] (guaA) from Helicobacter pylori (strain J99 / ATCC 700824) (Campylobacter pylori J99).